Reading from the N-terminus, the 224-residue chain is Deoxyribose-phosphate aldolase (224 aa).

Asp-94 functions as the Proton donor/acceptor in the catalytic mechanism. Lys-156 acts as the Schiff-base intermediate with acetaldehyde in catalysis. The Proton donor/acceptor role is filled by Lys-184.

The protein belongs to the DeoC/FbaB aldolase family. DeoC type 1 subfamily.

The protein resides in the cytoplasm. It catalyses the reaction 2-deoxy-D-ribose 5-phosphate = D-glyceraldehyde 3-phosphate + acetaldehyde. It participates in carbohydrate degradation; 2-deoxy-D-ribose 1-phosphate degradation; D-glyceraldehyde 3-phosphate and acetaldehyde from 2-deoxy-alpha-D-ribose 1-phosphate: step 2/2. Catalyzes a reversible aldol reaction between acetaldehyde and D-glyceraldehyde 3-phosphate to generate 2-deoxy-D-ribose 5-phosphate. The protein is Deoxyribose-phosphate aldolase of Methanocella arvoryzae (strain DSM 22066 / NBRC 105507 / MRE50).